A 176-amino-acid chain; its full sequence is Translation initiation factor IF-3 (176 aa).

This sequence belongs to the IF-3 family. Monomer.

Its subcellular location is the cytoplasm. Functionally, IF-3 binds to the 30S ribosomal subunit and shifts the equilibrium between 70S ribosomes and their 50S and 30S subunits in favor of the free subunits, thus enhancing the availability of 30S subunits on which protein synthesis initiation begins. This is Translation initiation factor IF-3 from Streptococcus mutans serotype c (strain ATCC 700610 / UA159).